The primary structure comprises 126 residues: Small ribosomal subunit protein uS13 (126 aa).

Positions 99–126 (LRGQSTKNNARTRKGKRKTVANKKRVTK) are disordered. Basic residues predominate over residues 108 to 126 (ARTRKGKRKTVANKKRVTK).

It belongs to the universal ribosomal protein uS13 family. Part of the 30S ribosomal subunit. Forms a loose heterodimer with protein S19. Forms two bridges to the 50S subunit in the 70S ribosome.

Functionally, located at the top of the head of the 30S subunit, it contacts several helices of the 16S rRNA. In the 70S ribosome it contacts the 23S rRNA (bridge B1a) and protein L5 of the 50S subunit (bridge B1b), connecting the 2 subunits; these bridges are implicated in subunit movement. Contacts the tRNAs in the A and P-sites. The chain is Small ribosomal subunit protein uS13 from Azobacteroides pseudotrichonymphae genomovar. CFP2.